Reading from the N-terminus, the 395-residue chain is Elongation factor Tu (395 aa).

The tr-type G domain occupies 10-204 (KPHVNIGTIG…AVDEYIPTPQ (195 aa)). A G1 region spans residues 19–26 (GHVDHGKT). 19–26 (GHVDHGKT) serves as a coordination point for GTP. T26 is a Mg(2+) binding site. The segment at 60–64 (GITIS) is G2. Residues 81–84 (DCPG) are G3. GTP contacts are provided by residues 81–85 (DCPGH) and 136–139 (NKCD). Positions 136 to 139 (NKCD) are G4. Residues 174–176 (SAL) are G5.

Belongs to the TRAFAC class translation factor GTPase superfamily. Classic translation factor GTPase family. EF-Tu/EF-1A subfamily. As to quaternary structure, monomer.

Its subcellular location is the cytoplasm. The enzyme catalyses GTP + H2O = GDP + phosphate + H(+). In terms of biological role, GTP hydrolase that promotes the GTP-dependent binding of aminoacyl-tRNA to the A-site of ribosomes during protein biosynthesis. This is Elongation factor Tu from Geobacillus kaustophilus (strain HTA426).